The chain runs to 263 residues: Probable ABC transporter permease protein ycf63 (263 aa).

A run of 6 helical transmembrane segments spans residues 43-63, 82-102, 136-156, 159-179, 199-219, and 230-250; these read LVGPGSLNITLLTACFISMVF, AVIVIAFTRELSPVLTAVIIA, LVFPKVAACCIMLPILSTISL, SIAISIFVSFVMYGIPSSIFL, LCFGTIIAFISCQWGLTSSGG, and SVVTILLTIFITDFILSYFMF.

Belongs to the MlaE permease family.

Its subcellular location is the plastid. It localises to the chloroplast membrane. Functionally, could be part of an ABC transporter complex. This is Probable ABC transporter permease protein ycf63 (ycf63) from Porphyra purpurea (Red seaweed).